The sequence spans 385 residues: Probable tRNA sulfurtransferase (385 aa).

Positions 57 to 160 (DGVIERVKKV…RGNAYVFTDK (104 aa)) constitute a THUMP domain. Residues 180–181 (ML), 205–206 (YY), R262, G284, and Q293 contribute to the ATP site.

This sequence belongs to the ThiI family.

The protein resides in the cytoplasm. The enzyme catalyses [ThiI sulfur-carrier protein]-S-sulfanyl-L-cysteine + a uridine in tRNA + 2 reduced [2Fe-2S]-[ferredoxin] + ATP + H(+) = [ThiI sulfur-carrier protein]-L-cysteine + a 4-thiouridine in tRNA + 2 oxidized [2Fe-2S]-[ferredoxin] + AMP + diphosphate. The catalysed reaction is [ThiS sulfur-carrier protein]-C-terminal Gly-Gly-AMP + S-sulfanyl-L-cysteinyl-[cysteine desulfurase] + AH2 = [ThiS sulfur-carrier protein]-C-terminal-Gly-aminoethanethioate + L-cysteinyl-[cysteine desulfurase] + A + AMP + 2 H(+). It participates in cofactor biosynthesis; thiamine diphosphate biosynthesis. Functionally, catalyzes the ATP-dependent transfer of a sulfur to tRNA to produce 4-thiouridine in position 8 of tRNAs, which functions as a near-UV photosensor. Also catalyzes the transfer of sulfur to the sulfur carrier protein ThiS, forming ThiS-thiocarboxylate. This is a step in the synthesis of thiazole, in the thiamine biosynthesis pathway. The sulfur is donated as persulfide by IscS. This chain is Probable tRNA sulfurtransferase, found in Clostridium perfringens (strain 13 / Type A).